Here is a 419-residue protein sequence, read N- to C-terminus: Divinyl chlorophyllide a 8-vinyl-reductase, chloroplastic (419 aa).

The transit peptide at 1 to 71 directs the protein to the chloroplast; it reads MSICSTVGAG…PIVVSSTPVV (71 aa).

It localises to the plastid. Its subcellular location is the chloroplast. The enzyme catalyses protochlorophyllide a + NADP(+) = 3,8-divinyl protochlorophyllide a + NADPH + H(+). Its pathway is porphyrin-containing compound metabolism; chlorophyll biosynthesis. Catalyzes the conversion of divinyl chlorophyllide to monovinyl chlorophyllide. Reduces the 8-vinyl group of the tetrapyrrole to an ethyl group using NADPH as the reductant. The best substrate is (3,8-divinyl)-chlorophyllide a (DV-Chlidea). Very low activity with (3,8-divinyl)-protochlorophyllide a (DV-Pchlidea) and (3,8-divinyl)-magnesium-protoporphyrin IX monomethyl ester (DV-MPE). No activity with (3,8-divinyl)-magnesium-protoporphyrin IX (DV-Mg-Proto) and (3,8-divinyl)-chlorophyll a (DV-Chla). This Cucumis sativus (Cucumber) protein is Divinyl chlorophyllide a 8-vinyl-reductase, chloroplastic (DVR).